Here is a 289-residue protein sequence, read N- to C-terminus: ATP synthase gamma chain (289 aa).

It belongs to the ATPase gamma chain family. F-type ATPases have 2 components, CF(1) - the catalytic core - and CF(0) - the membrane proton channel. CF(1) has five subunits: alpha(3), beta(3), gamma(1), delta(1), epsilon(1). CF(0) has three main subunits: a, b and c.

It localises to the cell inner membrane. Produces ATP from ADP in the presence of a proton gradient across the membrane. The gamma chain is believed to be important in regulating ATPase activity and the flow of protons through the CF(0) complex. This Azobacteroides pseudotrichonymphae genomovar. CFP2 protein is ATP synthase gamma chain.